The chain runs to 660 residues: Threonine--tRNA ligase (660 aa).

Positions 1 to 49 constitute a TGS domain; it reads MPINEIRVQKGQRYRDAINDKKVIAVKKGDKFLDLDEIAGEDEAVQPVY. Positions 225–554 are catalytic; that stretch reads DHRKIIAEMD…LLEHFAGKLP (330 aa). 3 residues coordinate Zn(2+): Cys-318, His-369, and His-531.

It belongs to the class-II aminoacyl-tRNA synthetase family. As to quaternary structure, homodimer. It depends on Zn(2+) as a cofactor.

The protein localises to the cytoplasm. It carries out the reaction tRNA(Thr) + L-threonine + ATP = L-threonyl-tRNA(Thr) + AMP + diphosphate + H(+). Functionally, catalyzes the attachment of threonine to tRNA(Thr) in a two-step reaction: L-threonine is first activated by ATP to form Thr-AMP and then transferred to the acceptor end of tRNA(Thr). In Thermoplasma volcanium (strain ATCC 51530 / DSM 4299 / JCM 9571 / NBRC 15438 / GSS1), this protein is Threonine--tRNA ligase.